The primary structure comprises 80 residues: Acyl carrier protein (80 aa).

Residues 4 to 79 (EAILEKVRSI…DAVKYIEEKQ (76 aa)) form the Carrier domain. S39 is subject to O-(pantetheine 4'-phosphoryl)serine.

This sequence belongs to the acyl carrier protein (ACP) family. 4'-phosphopantetheine is transferred from CoA to a specific serine of apo-ACP by AcpS. This modification is essential for activity because fatty acids are bound in thioester linkage to the sulfhydryl of the prosthetic group.

Its subcellular location is the cytoplasm. Its pathway is lipid metabolism; fatty acid biosynthesis. Its function is as follows. Carrier of the growing fatty acid chain in fatty acid biosynthesis. The chain is Acyl carrier protein from Prochlorococcus marinus (strain NATL1A).